Consider the following 662-residue polypeptide: Pro-neuregulin-1, membrane-bound isoform (662 aa).

A propeptide spanning residues 1 to 13 (MSERKEGRGKGKG) is cleaved from the precursor. The tract at residues 1-52 (MSERKEGRGKGKGKKKDRGSRGKPGPAEGDPSPALPPRLKEMKSQESAAGSK) is disordered. The Extracellular portion of the chain corresponds to 14–265 (KKKDRGSRGK…SKAEELYQKR (252 aa)). An Ig-like C2-type domain is found at 37–128 (PRLKEMKSQE…GNDSASANIT (92 aa)). An intrachain disulfide couples Cys57 to Cys112. Residues Asn120, Asn126, and Asn164 are each glycosylated (N-linked (GlcNAc...) asparagine). Residues 178-222 (HLIKCAEKEKTFCVNGGECFTVKDLSNPSRYLCKCPNEFTGDRCQ) form the EGF-like domain. Intrachain disulfides connect Cys182/Cys196, Cys190/Cys210, and Cys212/Cys221. The chain crosses the membrane as a helical span at residues 266 to 288 (VLTITGICIALLVVGIMCVVAYC). Over 289–662 (KTKKQRQKLH…VIANQDPIAV (374 aa)) the chain is Cytoplasmic. Over residues 358 to 373 (SHYTSTAHHSTTVTQT) the composition is skewed to low complexity. Disordered regions lie at residues 358–383 (SHYT…NGHT), 398–480 (SVEN…PVSS), and 547–610 (YETT…DTPF). Positions 374–383 (PSHSWSNGHT) are enriched in polar residues. Residues 410–420 (GPRGRLHGLGG) show a composition bias toward gly residues. Residues 425 to 445 (SFLRHARETPDSYRDSPHSER) show a composition bias toward basic and acidic residues. Positions 564-574 (TNSRRAKRTKP) are enriched in basic residues. Positions 585 to 596 (DSNTSSVSSNSE) are enriched in low complexity.

It belongs to the neuregulin family. The cytoplasmic domain interacts with the LIM domain region of LIMK1. Forms a ternary complex with ERBB3 and ITGAV:ITGB3 or ITGA6:ITGB4. Interacts with NRDC and BACE1. In terms of processing, proteolytic cleavage close to the plasma membrane on the external face leads to the release of the soluble growth factor form. Post-translationally, N- and O-glycosylated. Extensive glycosylation precedes the proteolytic cleavage. As to expression, widely expressed. Most tissues contain isoform alpha2A and isoform alpha2B. Isoform Alpha2 and isoform beta2 are the predominant forms in mesenchymal and non-neuronal organs. Isoform Beta1 is enriched in brain and spinal cord, but not in muscle and heart. Isoform Alpha2C is highly expressed in spinal cord, moderately in lung, brain, ovary, and stomach, in low amounts in the kidney, skin and heart and not detected in the liver, spleen, and placenta.

The protein localises to the cell membrane. It is found in the secreted. In terms of biological role, direct ligand for ERBB3 and ERBB4 tyrosine kinase receptors. Concomitantly recruits ERBB1 and ERBB2 coreceptors, resulting in ligand-stimulated tyrosine phosphorylation and activation of the ERBB receptors. The multiple isoforms perform diverse functions such as inducing growth and differentiation of epithelial, glial, neuronal, and skeletal muscle cells; inducing expression of acetylcholine receptor in synaptic vesicles during the formation of the neuromuscular junction; stimulating lobuloalveolar budding and milk production in the mammary gland and inducing differentiation of mammary tumor cells; stimulating Schwann cell proliferation; implication in the development of the myocardium such as trabeculation of the developing heart. Binds to ERBB4 and ERBB3. Acts as a ligand for integrins and binds (via EGF domain) to integrins ITGAV:ITGB3 or ITGA6:ITGB4. Its binding to integrins and subsequent ternary complex formation with integrins and ERRB3 are essential for NRG1-ERBB signaling. Induces the phosphorylation and activation of MAPK3/ERK1, MAPK1/ERK2 and AKT1, and ligand-dependent ERBB4 endocytosis is essential for the NRG1-mediated activation of these kinases in neurons. The protein is Pro-neuregulin-1, membrane-bound isoform (Nrg1) of Rattus norvegicus (Rat).